A 749-amino-acid polypeptide reads, in one-letter code: Protein lin-54 homolog (749 aa).

Residue K139 forms a Glycyl lysine isopeptide (Lys-Gly) (interchain with G-Cter in SUMO2) linkage. K244 and K249 each carry N6-acetyllysine. 4 positions are modified to phosphoserine: S264, S282, S310, and S314. A Glycyl lysine isopeptide (Lys-Gly) (interchain with G-Cter in SUMO2) cross-link involves residue K357. Residues 521 to 634 (PRKPCNCTKS…KCIGCKNFEE (114 aa)) form the CRC domain. The DNA-binding stretch occupies residues 523 to 536 (KPCNCTKSLCLKLY). Residues C525, C527, C532, C537, C539, C546, C549, C551, and C554 each coordinate Zn(2+). The tract at residues 583-596 (IGKGKEGESDRRHS) is linker. Residues C599, C601, C606, C611, C613, C620, C624, C626, and C629 each contribute to the Zn(2+) site. The DNA-binding stretch occupies residues 599 to 612 (CNCKRSGCLKNYCE). Phosphoserine is present on S635. Glycyl lysine isopeptide (Lys-Gly) (interchain with G-Cter in SUMO2) cross-links involve residues K639, K659, and K661.

This sequence belongs to the lin-54 family. As to quaternary structure, component of the DREAM complex (also named LINC complex) at least composed of E2F4, E2F5, LIN9, LIN37, LIN52, LIN54, MYBL1, MYBL2, RBL1, RBL2, RBBP4, RBL2, TFDP1 and TFDP2. The complex exists in quiescent cells where it represses cell cycle-dependent genes. It dissociates in S phase when LIN9, LIN37, LIN52 and LIN54 form a subcomplex that binds to MYBL2.

Its subcellular location is the nucleus. Component of the DREAM complex, a multiprotein complex that can both act as a transcription activator or repressor depending on the context. In G0 phase, the complex binds to more than 800 promoters and is required for repression of E2F target genes. In S phase, the complex selectively binds to the promoters of G2/M genes whose products are required for mitosis and participates in their cell cycle dependent activation. In the complex, acts as a DNA-binding protein that binds the promoter of CDK1 in a sequence-specific manner. Specifically recognizes the consensus motif 5'-TTYRAA-3' in target DNA. The chain is Protein lin-54 homolog (Lin54) from Rattus norvegicus (Rat).